A 641-amino-acid chain; its full sequence is Anthrax toxin receptor-like (641 aa).

Positions 1-27 (MMSHSPSMPCSALFLLLLLLLPPTFKG) are cleaved as a signal peptide. The Extracellular portion of the chain corresponds to 28–363 (GSLRYHGPGW…ASQGIVFKRT (336 aa)). One can recognise a VWFA domain in the interval 76-247 (DLYLVLDKSG…SALEGVVDPL (172 aa)). S84, S86, and T150 together coordinate a divalent metal cation. A helical transmembrane segment spans residues 364 to 384 (WLMFLPVLLVTLLLLCCTWKL). The Cytoplasmic segment spans residues 385–641 (CIKPKKLPPP…FPPISKGPKF (257 aa)). The interval 391–455 (LPPPPPKPEK…ARPPPAPLPA (65 aa)) is disordered. Residues 407–436 (PPPSSPPAPGRGPGPGPSAGPGPGPGPSPG) show a composition bias toward pro residues.

The protein belongs to the ATR family.

The protein localises to the membrane. The polypeptide is Anthrax toxin receptor-like (Antxrl) (Mus musculus (Mouse)).